The primary structure comprises 503 residues: Probable cytochrome P450 303a1 (503 aa).

A heme-binding site is contributed by cysteine 448.

The protein belongs to the cytochrome P450 family. Requires heme as cofactor.

Its subcellular location is the endoplasmic reticulum membrane. It localises to the microsome membrane. In terms of biological role, may be involved in the metabolism of insect hormones and in the breakdown of synthetic insecticides. This is Probable cytochrome P450 303a1 (Cyp303a1) from Drosophila melanogaster (Fruit fly).